Consider the following 158-residue polypeptide: Protein Smg homolog (158 aa).

This sequence belongs to the Smg family.

In Pseudoalteromonas atlantica (strain T6c / ATCC BAA-1087), this protein is Protein Smg homolog.